Consider the following 154-residue polypeptide: Large ribosomal subunit protein uL13 (154 aa).

Residues aspartate 131–glycine 154 form a disordered region.

The protein belongs to the universal ribosomal protein uL13 family. Part of the 50S ribosomal subunit.

Functionally, this protein is one of the early assembly proteins of the 50S ribosomal subunit, although it is not seen to bind rRNA by itself. It is important during the early stages of 50S assembly. This chain is Large ribosomal subunit protein uL13, found in Maricaulis maris (strain MCS10) (Caulobacter maris).